A 237-amino-acid polypeptide reads, in one-letter code: Ditrans,polycis-undecaprenyl-diphosphate synthase ((2E,6E)-farnesyl-diphosphate specific) (237 aa).

D11 is an active-site residue. D11 contacts Mg(2+). Residues 12 to 15, W16, R24, H28, and 56 to 58 each bind substrate; these read GNGR and SIE. The Proton acceptor role is filled by N59. Substrate is bound by residues R62, R179, and 185–187; that span reads RLS. E198 lines the Mg(2+) pocket.

This sequence belongs to the UPP synthase family. In terms of assembly, homodimer. The cofactor is Mg(2+).

It catalyses the reaction 8 isopentenyl diphosphate + (2E,6E)-farnesyl diphosphate = di-trans,octa-cis-undecaprenyl diphosphate + 8 diphosphate. Its function is as follows. Catalyzes the sequential condensation of isopentenyl diphosphate (IPP) with (2E,6E)-farnesyl diphosphate (E,E-FPP) to yield (2Z,6Z,10Z,14Z,18Z,22Z,26Z,30Z,34E,38E)-undecaprenyl diphosphate (di-trans,octa-cis-UPP). UPP is the precursor of glycosyl carrier lipid in the biosynthesis of bacterial cell wall polysaccharide components such as peptidoglycan and lipopolysaccharide. The chain is Ditrans,polycis-undecaprenyl-diphosphate synthase ((2E,6E)-farnesyl-diphosphate specific) from Coxiella burnetii (strain RSA 493 / Nine Mile phase I).